The sequence spans 83 residues: Cell division protein ZapB (83 aa).

The stretch at 7–80 (EMLEKLEAKV…RVRTLLGKMD (74 aa)) forms a coiled coil.

The protein belongs to the ZapB family. Homodimer. The ends of the coiled-coil dimer bind to each other, forming polymers. Interacts with FtsZ.

It localises to the cytoplasm. Functionally, non-essential, abundant cell division factor that is required for proper Z-ring formation. It is recruited early to the divisome by direct interaction with FtsZ, stimulating Z-ring assembly and thereby promoting cell division earlier in the cell cycle. Its recruitment to the Z-ring requires functional FtsA or ZipA. This chain is Cell division protein ZapB, found in Photobacterium profundum (strain SS9).